Here is a 340-residue protein sequence, read N- to C-terminus: 4-hydroxy-3-methylbut-2-enyl diphosphate reductase (340 aa).

C19 is a [4Fe-4S] cluster binding site. Positions 50 and 90 each coordinate (2E)-4-hydroxy-3-methylbut-2-enyl diphosphate. Dimethylallyl diphosphate-binding residues include H50 and H90. H50 and H90 together coordinate isopentenyl diphosphate. A [4Fe-4S] cluster-binding site is contributed by C112. H141 is a binding site for (2E)-4-hydroxy-3-methylbut-2-enyl diphosphate. H141 is a binding site for dimethylallyl diphosphate. H141 is an isopentenyl diphosphate binding site. E143 (proton donor) is an active-site residue. T190 contributes to the (2E)-4-hydroxy-3-methylbut-2-enyl diphosphate binding site. Residue C220 coordinates [4Fe-4S] cluster. (2E)-4-hydroxy-3-methylbut-2-enyl diphosphate is bound by residues S248, S249, N250, and S292. Positions 248, 249, 250, and 292 each coordinate dimethylallyl diphosphate. 4 residues coordinate isopentenyl diphosphate: S248, S249, N250, and S292.

The protein belongs to the IspH family. Requires [4Fe-4S] cluster as cofactor.

It catalyses the reaction isopentenyl diphosphate + 2 oxidized [2Fe-2S]-[ferredoxin] + H2O = (2E)-4-hydroxy-3-methylbut-2-enyl diphosphate + 2 reduced [2Fe-2S]-[ferredoxin] + 2 H(+). It carries out the reaction dimethylallyl diphosphate + 2 oxidized [2Fe-2S]-[ferredoxin] + H2O = (2E)-4-hydroxy-3-methylbut-2-enyl diphosphate + 2 reduced [2Fe-2S]-[ferredoxin] + 2 H(+). It participates in isoprenoid biosynthesis; dimethylallyl diphosphate biosynthesis; dimethylallyl diphosphate from (2E)-4-hydroxy-3-methylbutenyl diphosphate: step 1/1. The protein operates within isoprenoid biosynthesis; isopentenyl diphosphate biosynthesis via DXP pathway; isopentenyl diphosphate from 1-deoxy-D-xylulose 5-phosphate: step 6/6. In terms of biological role, catalyzes the conversion of 1-hydroxy-2-methyl-2-(E)-butenyl 4-diphosphate (HMBPP) into a mixture of isopentenyl diphosphate (IPP) and dimethylallyl diphosphate (DMAPP). Acts in the terminal step of the DOXP/MEP pathway for isoprenoid precursor biosynthesis. This Thermus thermophilus (strain ATCC BAA-163 / DSM 7039 / HB27) protein is 4-hydroxy-3-methylbut-2-enyl diphosphate reductase.